Reading from the N-terminus, the 146-residue chain is Snaclec 1 (146 aa).

Residues 1 to 23 form the signal peptide; sequence MGRFIFMSFGLLVVFLSLSGTGA. 3 disulfides stabilise this stretch: C25–C36, C53–C142, and C119–C134. Residues 32 to 143 form the C-type lectin domain; the sequence is YEGHCYRVFQ…CSRTYSFVCK (112 aa).

The protein belongs to the snaclec family. In terms of assembly, heterodimer; disulfide-linked. As to expression, expressed by the venom gland.

Its subcellular location is the secreted. Interferes with one step of hemostasis (modulation of platelet aggregation, or coagulation cascade, for example). The protein is Snaclec 1 of Sistrurus catenatus edwardsii (Desert massasauga).